Here is a 104-residue protein sequence, read N- to C-terminus: Putative heat shock protein PS1 (104 aa).

Asn11 and Asn18 each carry an N-linked (GlcNAc...) asparagine glycan. Residue Asn18 participates in ATP binding.

This sequence belongs to the heat shock protein 90 family. Homodimer.

The protein resides in the cytoplasm. In terms of biological role, putative molecular chaperone that may promote the maturation, structural maintenance and proper regulation of specific target proteins. The protein is Putative heat shock protein PS1 of Pinus strobus (Eastern white pine).